We begin with the raw amino-acid sequence, 463 residues long: Phosphomannomutase (463 aa).

The Phosphoserine intermediate role is filled by Ser103. Mg(2+) contacts are provided by Ser103, Asp248, Asp250, and Asp252.

The protein belongs to the phosphohexose mutase family. Requires Mg(2+) as cofactor.

The protein localises to the cell membrane. It carries out the reaction alpha-D-mannose 1-phosphate = D-mannose 6-phosphate. It participates in nucleotide-sugar biosynthesis; GDP-alpha-D-mannose biosynthesis; alpha-D-mannose 1-phosphate from D-fructose 6-phosphate: step 2/2. It functions in the pathway bacterial outer membrane biogenesis; LPS O-antigen biosynthesis. Its function is as follows. Involved in GDP-mannose biosynthesis which serves as the activated sugar nucleotide precursor for mannose residues in cell surface polysaccharides. The sequence is that of Phosphomannomutase (rfbB) from Vibrio cholerae serotype O1 (strain ATCC 39315 / El Tor Inaba N16961).